Here is a 234-residue protein sequence, read N- to C-terminus: R-spondin-4 (234 aa).

A signal peptide spans 1 to 19 (MRAPLCLLLLVAHAVDMLA). Asn34 is a glycosylation site (N-linked (GlcNAc...) asparagine). 11 disulfide bridges follow: Cys35-Cys41, Cys38-Cys47, Cys50-Cys69, Cys73-Cys88, Cys91-Cys98, Cys95-Cys104, Cys107-Cys118, Cys122-Cys135, Cys139-Cys181, Cys150-Cys157, and Cys190-Cys196. The stretch at 85–128 (VNRCKKCGATCESCFSQDFCIRCKRQFYLYKGKCLPTCPPGTLA) is one FU repeat. A TSP type-1 domain is found at 138–197 (ECELGPWGGWSPCTHNGKTCGSAWGLESRVREAGRAGHEEAATCQVLSESRKCPIQRPCP). Positions 190–234 (CPIQRPCPGERSPGQKKGRKDRRPRKDRKLDRRLDVRPRQPGLQP) are disordered. Over residues 203–216 (GQKKGRKDRRPRKD) the composition is skewed to basic residues. Residues 217–227 (RKLDRRLDVRP) show a composition bias toward basic and acidic residues.

It belongs to the R-spondin family. Binds heparin. Interacts with LGR4, LGR5 and LGR6. In terms of processing, tyr-112 may be phosphorylated; however as this position is probably extracellular, the vivo relevance is not proven.

It is found in the secreted. Its function is as follows. Activator of the canonical Wnt signaling pathway by acting as a ligand for LGR4-6 receptors. Upon binding to LGR4-6 (LGR4, LGR5 or LGR6), LGR4-6 associate with phosphorylated LRP6 and frizzled receptors that are activated by extracellular Wnt receptors, triggering the canonical Wnt signaling pathway to increase expression of target genes. Also regulates the canonical Wnt/beta-catenin-dependent pathway and non-canonical Wnt signaling by acting as an inhibitor of ZNRF3, an important regulator of the Wnt signaling pathway. The sequence is that of R-spondin-4 (RSPO4) from Homo sapiens (Human).